The primary structure comprises 93 residues: Beta-defensin 128 (93 aa).

Positions 1–18 (MKLFLVLIILLFEVLTDG) are cleaved as a signal peptide. 3 disulfide bridges follow: C24-C52, C32-C46, and C36-C53.

The protein belongs to the beta-defensin family.

The protein resides in the secreted. In terms of biological role, has antibacterial activity. The sequence is that of Beta-defensin 128 (DEFB128) from Homo sapiens (Human).